The chain runs to 218 residues: Mitochondrial import inner membrane translocase subunit TIM17-1 (218 aa).

4 consecutive transmembrane segments (helical) span residues 19-36 (VGGA…YHLI), 66-82 (FSVW…ALVY), 89-105 (PWNS…FLSL), and 116-133 (ALVG…GIML).

This sequence belongs to the Tim17/Tim22/Tim23 family. Component of the TIM17:23 complex at least composed of TIM23, TIM17 and TIM50. The complex interacts with the TIM44 component of the PAM complex. As to expression, expressed in flowers, leaves and cotyledons, and at very low levels in roots.

It localises to the mitochondrion inner membrane. Functionally, essential component of the TIM17:23 complex, a complex that mediates the translocation of transit peptide-containing proteins across the mitochondrial inner membrane. Links the inner and outer membranes. This is Mitochondrial import inner membrane translocase subunit TIM17-1 (TIM17-1) from Arabidopsis thaliana (Mouse-ear cress).